A 168-amino-acid chain; its full sequence is Phosphopantetheine adenylyltransferase (168 aa).

Ser-8 lines the substrate pocket. Residues 8 to 9 and His-16 each bind ATP; that span reads SF. Substrate is bound by residues Lys-40, Thr-72, and Arg-86. Residues 87-89, Glu-97, and 122-128 contribute to the ATP site; these read GLR and YSFLSSS.

The protein belongs to the bacterial CoaD family. Homohexamer. The cofactor is Mg(2+).

It localises to the cytoplasm. It carries out the reaction (R)-4'-phosphopantetheine + ATP + H(+) = 3'-dephospho-CoA + diphosphate. Its pathway is cofactor biosynthesis; coenzyme A biosynthesis; CoA from (R)-pantothenate: step 4/5. In terms of biological role, reversibly transfers an adenylyl group from ATP to 4'-phosphopantetheine, yielding dephospho-CoA (dPCoA) and pyrophosphate. This is Phosphopantetheine adenylyltransferase from Thermosynechococcus vestitus (strain NIES-2133 / IAM M-273 / BP-1).